Reading from the N-terminus, the 473-residue chain is tRNA modification GTPase MnmE (473 aa).

R28, E93, and R132 together coordinate (6S)-5-formyl-5,6,7,8-tetrahydrofolate. The region spanning 228–394 (GVATVLVGSP…LKQQMSNMVA (167 aa)) is the TrmE-type G domain. GTP contacts are provided by residues 238–243 (NAGKST), 257–263 (SHQPGTT), and 282–285 (DTAG). Positions 242 and 263 each coordinate Mg(2+). K473 contacts (6S)-5-formyl-5,6,7,8-tetrahydrofolate.

The protein belongs to the TRAFAC class TrmE-Era-EngA-EngB-Septin-like GTPase superfamily. TrmE GTPase family. Homodimer. Heterotetramer of two MnmE and two MnmG subunits. K(+) is required as a cofactor.

The protein resides in the cytoplasm. Its function is as follows. Exhibits a very high intrinsic GTPase hydrolysis rate. Involved in the addition of a carboxymethylaminomethyl (cmnm) group at the wobble position (U34) of certain tRNAs, forming tRNA-cmnm(5)s(2)U34. This is tRNA modification GTPase MnmE from Chlorobium chlorochromatii (strain CaD3).